The following is a 510-amino-acid chain: Ribonuclease Y (510 aa).

The chain crosses the membrane as a helical span at residues 4–24 (LLWAVVALLAGLAGGAGIGVY). Positions 200-260 (TVSTVNLPSE…VRREVARVAL (61 aa)) constitute a KH domain. Positions 326–419 (VLQHSLECAL…VIAADAISGA (94 aa)) constitute an HD domain.

The protein belongs to the RNase Y family.

Its subcellular location is the cell membrane. Its function is as follows. Endoribonuclease that initiates mRNA decay. The polypeptide is Ribonuclease Y (Chloroflexus aurantiacus (strain ATCC 29366 / DSM 635 / J-10-fl)).